We begin with the raw amino-acid sequence, 253 residues long: Large ribosomal subunit protein uL2C (253 aa).

It belongs to the universal ribosomal protein uL2 family. As to quaternary structure, component of the large ribosomal subunit (LSU). Mature yeast ribosomes consist of a small (40S) and a large (60S) subunit. The 40S small subunit contains 1 molecule of ribosomal RNA (18S rRNA) and at least 33 different proteins. The large 60S subunit contains 3 rRNA molecules (25S, 5.8S and 5S rRNA) and at least 46 different proteins.

It is found in the cytoplasm. Its subcellular location is the nucleus. Component of the ribosome, a large ribonucleoprotein complex responsible for the synthesis of proteins in the cell. The small ribosomal subunit (SSU) binds messenger RNAs (mRNAs) and translates the encoded message by selecting cognate aminoacyl-transfer RNA (tRNA) molecules. The large subunit (LSU) contains the ribosomal catalytic site termed the peptidyl transferase center (PTC), which catalyzes the formation of peptide bonds, thereby polymerizing the amino acids delivered by tRNAs into a polypeptide chain. The nascent polypeptides leave the ribosome through a tunnel in the LSU and interact with protein factors that function in enzymatic processing, targeting, and the membrane insertion of nascent chains at the exit of the ribosomal tunnel. The protein is Large ribosomal subunit protein uL2C (rpl803) of Schizosaccharomyces pombe (strain 972 / ATCC 24843) (Fission yeast).